A 51-amino-acid polypeptide reads, in one-letter code: Large ribosomal subunit protein bL33 (51 aa).

The disordered stretch occupies residues 1 to 21 (MRDKIKLESGAGTGHFYTTTK).

This sequence belongs to the bacterial ribosomal protein bL33 family.

This is Large ribosomal subunit protein bL33 from Neisseria gonorrhoeae (strain ATCC 700825 / FA 1090).